The following is a 1458-amino-acid chain: Anaphase-promoting complex subunit 1 (1458 aa).

The tract at residues 186-210 (QSIKSSRNRRRESSFSREKNPDLTR) is disordered. A compositionally biased stretch (basic and acidic residues) spans 196-210 (RESSFSREKNPDLTR). PC repeat units follow at residues 873–895 (GLLL…KLLS), 959–982 (AAGF…SDLK), 1006–1024 (GAIM…LEVA), and 1099–1124 (GICF…INFL).

The protein belongs to the APC1 family. As to quaternary structure, the APC/C is composed of at least 13 subunits: apc1, apc2, nuc2, apc4, apc5, cut9, apc8, apc10, apc11, hcn1, apc13, apc14 and apc15.

Component of the anaphase-promoting complex/cyclosome (APC/C), a cell cycle-regulated E3 ubiquitin-protein ligase complex that controls progression through mitosis and the G1 phase of the cell cycle. The APC/C is thought to confer substrate specificity and, in the presence of ubiquitin-conjugating E2 enzymes, it catalyzes the formation of protein-ubiquitin conjugates that are subsequently degraded by the 26S proteasome. Mutations to this protein prevent the exit from mitosis. The polypeptide is Anaphase-promoting complex subunit 1 (cut4) (Schizosaccharomyces pombe (strain 972 / ATCC 24843) (Fission yeast)).